We begin with the raw amino-acid sequence, 192 residues long: Cytochrome c oxidase assembly protein CtaG (192 aa).

Residues Met1–Thr9 are Cytoplasmic-facing. Residues Ala10–Phe30 traverse the membrane as a helical; Signal-anchor for type II membrane protein segment. The Periplasmic portion of the chain corresponds to Tyr31–Asn192.

This sequence belongs to the COX11/CtaG family.

The protein resides in the cell inner membrane. In terms of biological role, exerts its effect at some terminal stage of cytochrome c oxidase synthesis, probably by being involved in the insertion of the copper B into subunit I. This Cereibacter sphaeroides (strain ATCC 17025 / ATH 2.4.3) (Rhodobacter sphaeroides) protein is Cytochrome c oxidase assembly protein CtaG.